Consider the following 199-residue polypeptide: Pyridoxine/pyridoxamine 5'-phosphate oxidase (199 aa).

Residues 44–49, 59–60, K66, and Q91 contribute to the FMN site; these read RTVLLK and YT. K49 contacts substrate. 3 residues coordinate substrate: Y109, R113, and S117. Residues 126 to 127 and W171 contribute to the FMN site; that span reads QS. 177 to 179 provides a ligand contact to substrate; that stretch reads RLH. R181 serves as a coordination point for FMN.

It belongs to the pyridoxamine 5'-phosphate oxidase family. In terms of assembly, homodimer. Requires FMN as cofactor.

It carries out the reaction pyridoxamine 5'-phosphate + O2 + H2O = pyridoxal 5'-phosphate + H2O2 + NH4(+). The catalysed reaction is pyridoxine 5'-phosphate + O2 = pyridoxal 5'-phosphate + H2O2. Its pathway is cofactor metabolism; pyridoxal 5'-phosphate salvage; pyridoxal 5'-phosphate from pyridoxamine 5'-phosphate: step 1/1. The protein operates within cofactor metabolism; pyridoxal 5'-phosphate salvage; pyridoxal 5'-phosphate from pyridoxine 5'-phosphate: step 1/1. Its function is as follows. Catalyzes the oxidation of either pyridoxine 5'-phosphate (PNP) or pyridoxamine 5'-phosphate (PMP) into pyridoxal 5'-phosphate (PLP). The protein is Pyridoxine/pyridoxamine 5'-phosphate oxidase of Xanthomonas euvesicatoria pv. vesicatoria (strain 85-10) (Xanthomonas campestris pv. vesicatoria).